We begin with the raw amino-acid sequence, 156 residues long: FUN14 domain-containing protein 1 (156 aa).

The YXXL motif lies at 19–22; the sequence is YEVL. Transmembrane regions (helical) follow at residues 49–69, 76–96, and 135–155; these read YSVA…GFLF, AATA…SGYV, and FIKQ…LGLA.

Belongs to the FUN14 family.

Its subcellular location is the mitochondrion outer membrane. Acts as an activator of hypoxia-induced mitophagy, an important mechanism for mitochondrial quality control. The chain is FUN14 domain-containing protein 1 (FUNDC1) from Gallus gallus (Chicken).